The chain runs to 252 residues: Gamma carbonic anhydrase-like 1, mitochondrial (252 aa).

The transit peptide at 1-29 directs the protein to the mitochondrion; sequence MATSIARLSRRGVTSNLIRRCFAAEAALA. Substrate contacts are provided by residues 99 to 101 and 114 to 115; these read RGD and QE. Residue H120 participates in Zn(2+) binding. Positions 148, 160, and 227 each coordinate substrate.

The protein belongs to the gamma-class carbonic anhydrase family. Component of the mitochondrial oxidoreductase respiratory chain complex I; element of the extra matrix-exposed domain, which is attached to the membrane arm of this complex. Interacts with GAMMACA2.

It is found in the mitochondrion membrane. Its function is as follows. Involved in complex I assembly in mitochondria and respiration. This chain is Gamma carbonic anhydrase-like 1, mitochondrial (GAMMACAL1), found in Arabidopsis thaliana (Mouse-ear cress).